We begin with the raw amino-acid sequence, 251 residues long: Triosephosphate isomerase (251 aa).

12-14 (NWK) is a binding site for substrate. H99 serves as the catalytic Electrophile. E169 serves as the catalytic Proton acceptor. Substrate is bound by residues G175, S214, and 235–236 (GG).

This sequence belongs to the triosephosphate isomerase family. In terms of assembly, homodimer.

It localises to the cytoplasm. The catalysed reaction is D-glyceraldehyde 3-phosphate = dihydroxyacetone phosphate. Its pathway is carbohydrate biosynthesis; gluconeogenesis. It functions in the pathway carbohydrate degradation; glycolysis; D-glyceraldehyde 3-phosphate from glycerone phosphate: step 1/1. In terms of biological role, involved in the gluconeogenesis. Catalyzes stereospecifically the conversion of dihydroxyacetone phosphate (DHAP) to D-glyceraldehyde-3-phosphate (G3P). The protein is Triosephosphate isomerase of Bradyrhizobium sp. (strain BTAi1 / ATCC BAA-1182).